We begin with the raw amino-acid sequence, 320 residues long: Acetyl-coenzyme A carboxylase carboxyl transferase subunit alpha (320 aa).

A CoA carboxyltransferase C-terminal domain is found at 39 to 293 (ALDAKAAKLL…RGAIAAMLKE (255 aa)).

Belongs to the AccA family. As to quaternary structure, acetyl-CoA carboxylase is a heterohexamer composed of biotin carboxyl carrier protein (AccB), biotin carboxylase (AccC) and two subunits each of ACCase subunit alpha (AccA) and ACCase subunit beta (AccD).

It localises to the cytoplasm. It catalyses the reaction N(6)-carboxybiotinyl-L-lysyl-[protein] + acetyl-CoA = N(6)-biotinyl-L-lysyl-[protein] + malonyl-CoA. It functions in the pathway lipid metabolism; malonyl-CoA biosynthesis; malonyl-CoA from acetyl-CoA: step 1/1. Component of the acetyl coenzyme A carboxylase (ACC) complex. First, biotin carboxylase catalyzes the carboxylation of biotin on its carrier protein (BCCP) and then the CO(2) group is transferred by the carboxyltransferase to acetyl-CoA to form malonyl-CoA. In Ruegeria pomeroyi (strain ATCC 700808 / DSM 15171 / DSS-3) (Silicibacter pomeroyi), this protein is Acetyl-coenzyme A carboxylase carboxyl transferase subunit alpha.